The chain runs to 270 residues: Regulatory protein RecX (270 aa).

This sequence belongs to the RecX family.

The protein resides in the cytoplasm. Its function is as follows. Modulates RecA activity. This chain is Regulatory protein RecX, found in Bacillus cereus (strain ZK / E33L).